The sequence spans 796 residues: Bud site selection protein 27 (796 aa).

Positions 81–121 (KEEAITFVDDKLKLMEDAIEQFNLKIEEAKKTLDNLNHMED) form a coiled coil. Polar residues predominate over residues 152–168 (VISSSVTPTTKQPSQSN). Disordered regions lie at residues 152–197 (VISS…EENL), 300–344 (LRAQ…QVGF), 421–458 (EGEA…TTRS), 535–624 (EKEP…AKTG), and 752–796 (ATAS…DSKP). 2 stretches are compositionally biased toward basic and acidic residues: residues 169 to 197 (SKKE…EENL) and 306 to 318 (SQDH…DVNK). The span at 427 to 441 (SNRRTRVSRFRKDRA) shows a compositional bias: basic residues. The segment covering 535–550 (EKEPEINSKSEFETPF) has biased composition (basic and acidic residues). The span at 551–568 (KKKKLKSLQKPRSSKSMK) shows a compositional bias: basic residues. A compositionally biased stretch (acidic residues) spans 579–589 (ISDDDYDDDDD). Ser580 is modified (phosphoserine). Basic and acidic residues predominate over residues 601 to 610 (NNTDEQDKFP).

This sequence belongs to the prefoldin subunit alpha family.

The protein resides in the cytoplasm. Functionally, involved in gene expression controlled by TOR kinase and nutrient signaling. May also be involved in positioning the proximal bud pole signal. The polypeptide is Bud site selection protein 27 (BUD27) (Saccharomyces cerevisiae (strain ATCC 204508 / S288c) (Baker's yeast)).